We begin with the raw amino-acid sequence, 556 residues long: Vacuolar protein 8 (556 aa).

Gly2 carries N-myristoyl glycine lipidation. Residues Cys4, Cys5, and Cys7 are each lipidated (S-palmitoyl cysteine). 9 ARM repeats span residues 38–74 (NRSEVDFFTDGPLRALSTLVYSENIDLQRSAALAFAE), 75–115 (VTEK…NLAV), 117–156 (DSNKVLIVNMGGLEPLIRQMMSPNIEVQCNAVGCITNLAT), 158–197 (DQNKSKIATSGALIPLTKLAKSKDLRVQRNATGALLNMTH), 199–238 (LENRQELVNAGSVPILVQLLSSTDPDVQYYCTTALSNIAV), 242–281 (NRKKLASTEPKLISQLVQLMDSTSPRVQCQATLALRNLAS), 283–322 (ANYQLEIVRAGGLPNLVTLLNSTHQPLVLAAVACIRNISI), 324–364 (PLNE…NLAA), and 408–447 (DDLKMKLLDSNIIEVLLPLTSSENGEVCGNAAAALANLCS).

This sequence belongs to the beta-catenin family.

The protein resides in the vacuole membrane. Functionally, functions in both vacuole inheritance and protein targeting from the cytoplasm to vacuole. This chain is Vacuolar protein 8 (VAC8), found in Komagataella pastoris (Yeast).